The sequence spans 439 residues: Paraneoplastic antigen-like protein 8A (439 aa).

The tract at residues 213–439 (ETPNNWNATE…RRATNESRKV (227 aa)) is disordered. Basic residues predominate over residues 231–249 (LVRRAGAKSRSRRKKQKKN). Polar residues predominate over residues 403 to 419 (KAPQGQQPAEATASTSR). Basic and acidic residues predominate over residues 423 to 439 (AKPEGSPRRATNESRKV).

It belongs to the PNMA family.

The chain is Paraneoplastic antigen-like protein 8A (PNMA8A) from Pongo abelii (Sumatran orangutan).